We begin with the raw amino-acid sequence, 224 residues long: ATP phosphoribosyltransferase (224 aa).

It belongs to the ATP phosphoribosyltransferase family. Short subfamily. As to quaternary structure, heteromultimer composed of HisG and HisZ subunits.

Its subcellular location is the cytoplasm. The catalysed reaction is 1-(5-phospho-beta-D-ribosyl)-ATP + diphosphate = 5-phospho-alpha-D-ribose 1-diphosphate + ATP. It functions in the pathway amino-acid biosynthesis; L-histidine biosynthesis; L-histidine from 5-phospho-alpha-D-ribose 1-diphosphate: step 1/9. Functionally, catalyzes the condensation of ATP and 5-phosphoribose 1-diphosphate to form N'-(5'-phosphoribosyl)-ATP (PR-ATP). Has a crucial role in the pathway because the rate of histidine biosynthesis seems to be controlled primarily by regulation of HisG enzymatic activity. This Cupriavidus necator (strain ATCC 17699 / DSM 428 / KCTC 22496 / NCIMB 10442 / H16 / Stanier 337) (Ralstonia eutropha) protein is ATP phosphoribosyltransferase.